Reading from the N-terminus, the 196-residue chain is uncharacterized protein (196 aa).

A helical membrane pass occupies residues 22–42 (MIIIPMALLVFILIIGSFFAI).

Its subcellular location is the cell membrane. This is an uncharacterized protein from Lactobacillus acidophilus (strain ATCC 700396 / NCK56 / N2 / NCFM).